The following is a 751-amino-acid chain: Zinc finger protein 184 (751 aa).

The KRAB domain maps to 28–99; the sequence is VTFKDVIVDF…EPSIPVGTCA (72 aa). Phosphoserine occurs at positions 117, 122, and 199. Residues 191 to 202 are compositionally biased toward polar residues; the sequence is SNLVTQEPSPEE. The tract at residues 191 to 212 is disordered; sequence SNLVTQEPSPEETSTKRSIKQN. Lys206 participates in a covalent cross-link: Glycyl lysine isopeptide (Lys-Gly) (interchain with G-Cter in SUMO2). 19 consecutive C2H2-type zinc fingers follow at residues 222-244, 250-272, 278-300, 306-328, 334-356, 362-384, 390-412, 418-440, 446-468, 474-496, 502-524, 530-552, 558-580, 586-608, 614-636, 642-664, 670-692, 698-720, and 726-748; these read CKCNECGKAFSYCSALIRHQRTH, YKCNECEKAFSRSENLINHQRIH, YKCDQCGKGFIEGPSLTQHQRIH, YKCDECGKAFSQRTHLVQHQRIH, YTCNECGKAFSQRGHFMEHQKIH, FKCDECDKTFTRSTHLTQHQKIH, YKCNECGKAFNGPSTFIRHHMIH, YECNECGKAFSQHSNLTQHQKTH, YDCAECGKSFSYWSSLAQHLKIH, YKCNECGKAFSYCSSLTQHRRIH, FECSECGKAFSYLSNLNQHQKTH, YECKECGKAFIRSSSLAKHERIH, YQCHECGKTFSYGSSLIQHRKIH, YKCNECGRAFNQNIHLTQHKRIH, YECAECGKAFRHCSSLAQHQKTH, YQCNKCEKTFSQSSHLTQHQRIH, YKCNECDKAFSRSTHLTEHQNTH, YNCNECRKTFSQSTYLIQHQRIH, and FGCNDCGKSFRYRSALNKHQRLH.

This sequence belongs to the krueppel C2H2-type zinc-finger protein family. In terms of tissue distribution, predominant expression in testis.

It is found in the nucleus. Functionally, may be involved in transcriptional regulation. The polypeptide is Zinc finger protein 184 (ZNF184) (Homo sapiens (Human)).